A 322-amino-acid polypeptide reads, in one-letter code: Daunorubicin resistance ATP-binding protein DrrA2 (322 aa).

An ABC transporter domain is found at 6-236; that stretch reads VRAEAMEKRY…VGGDRIEVVV (231 aa). Position 38 to 45 (38 to 45) interacts with ATP; it reads GPNGAGKT.

It belongs to the ABC transporter superfamily. Drug exporter-1 (DrugE1) (TC 3.A.1.105) family. As to quaternary structure, the complex is probably composed of two ATP-binding proteins (DrrA2) and two transmembrane proteins (DrrB2).

The protein localises to the cell membrane. The catalysed reaction is daunorubicin(in) + ATP + H2O = daunorubicin(out) + ADP + phosphate + H(+). Part of the ABC transporter complex DrrA2B2 involved in daunorubicin efflux. Responsible for energy coupling to the transport system. Confers self-resistance to daunorubicin, an antibiotic produced by S.coeruleorubidus. This chain is Daunorubicin resistance ATP-binding protein DrrA2, found in Streptomyces coeruleorubidus.